We begin with the raw amino-acid sequence, 380 residues long: Endo-chitosanase C (380 aa).

The first 22 residues, 1–22, serve as a signal peptide directing secretion; it reads MPIKSFASRLALSLAICGTAMG. The stretch at 276 to 304 is one R3-1 repeat; sequence CSWPGHCAGATCSSNDDCSDDLTCQNGKC. Residues 311–341 form an R3-2 repeat; that stretch reads ETCSWEGHCKGATCSSNDDCSDELACISGIC. Residues 348–378 form an R3-3 repeat; it reads ETCEWEGHCEGASCSSHDDCDGNLACKNGKC.

The protein belongs to the glycosyl hydrolase 75 family.

The protein resides in the secreted. It carries out the reaction Endohydrolysis of beta-(1-&gt;4)-linkages between D-glucosamine residues in a partly acetylated chitosan.. Its function is as follows. Chitosanase catalyzing the endo-type cleavage of chitosan, the deacylated form of chitin. Chitosanase may be crucial in the degradation of the deacetylated portion of chitin in the fungal cell wall. Chitoolisaccharides produced by the hydrolysis of partially N-acetylated chitosan are known to have many biological activities, including antibacterial activity, immune-enhancing effects, and elicitor activity. This chain is Endo-chitosanase C (csnC), found in Aspergillus oryzae (Yellow koji mold).